Consider the following 474-residue polypeptide: tRNA-2-methylthio-N(6)-dimethylallyladenosine synthase (474 aa).

The 118-residue stretch at 3-120 (KKLHIKTWGC…LPEMINHVQG (118 aa)) folds into the MTTase N-terminal domain. 6 residues coordinate [4Fe-4S] cluster: Cys12, Cys49, Cys83, Cys157, Cys161, and Cys164. The Radical SAM core domain maps to 143–375 (RADGPTAFVS…QDRITKQAMR (233 aa)). One can recognise a TRAM domain in the interval 378 to 441 (RLMLGTVQRI…TNSLRGIVVR (64 aa)).

This sequence belongs to the methylthiotransferase family. MiaB subfamily. Monomer. [4Fe-4S] cluster is required as a cofactor.

The protein localises to the cytoplasm. It catalyses the reaction N(6)-dimethylallyladenosine(37) in tRNA + (sulfur carrier)-SH + AH2 + 2 S-adenosyl-L-methionine = 2-methylsulfanyl-N(6)-dimethylallyladenosine(37) in tRNA + (sulfur carrier)-H + 5'-deoxyadenosine + L-methionine + A + S-adenosyl-L-homocysteine + 2 H(+). In terms of biological role, catalyzes the methylthiolation of N6-(dimethylallyl)adenosine (i(6)A), leading to the formation of 2-methylthio-N6-(dimethylallyl)adenosine (ms(2)i(6)A) at position 37 in tRNAs that read codons beginning with uridine. This Pectobacterium atrosepticum (strain SCRI 1043 / ATCC BAA-672) (Erwinia carotovora subsp. atroseptica) protein is tRNA-2-methylthio-N(6)-dimethylallyladenosine synthase.